Consider the following 252-residue polypeptide: Protein GrpE (252 aa).

Residues 1–22 show a composition bias toward polar residues; the sequence is MHNPQSRGHNLSQAMSDQTVTN. Positions 1 to 70 are disordered; that stretch reads MHNPQSRGHN…EEDQASEATS (70 aa).

This sequence belongs to the GrpE family. In terms of assembly, homodimer.

The protein localises to the cytoplasm. Its function is as follows. Participates actively in the response to hyperosmotic and heat shock by preventing the aggregation of stress-denatured proteins, in association with DnaK and GrpE. It is the nucleotide exchange factor for DnaK and may function as a thermosensor. Unfolded proteins bind initially to DnaJ; upon interaction with the DnaJ-bound protein, DnaK hydrolyzes its bound ATP, resulting in the formation of a stable complex. GrpE releases ADP from DnaK; ATP binding to DnaK triggers the release of the substrate protein, thus completing the reaction cycle. Several rounds of ATP-dependent interactions between DnaJ, DnaK and GrpE are required for fully efficient folding. The chain is Protein GrpE from Thermosynechococcus vestitus (strain NIES-2133 / IAM M-273 / BP-1).